The primary structure comprises 158 residues: Transcriptional repressor NrdR (158 aa).

A zinc finger spans residues 3 to 34 (CPSCQNTDSRVLESRAADAGRSVRRRRECLHC). The ATP-cone domain maps to 49–139 (ITVLKRNGNR…VYRDFRGVND (91 aa)).

The protein belongs to the NrdR family. Zn(2+) is required as a cofactor.

In terms of biological role, negatively regulates transcription of bacterial ribonucleotide reductase nrd genes and operons by binding to NrdR-boxes. The polypeptide is Transcriptional repressor NrdR (Prochlorococcus marinus (strain MIT 9313)).